The chain runs to 393 residues: Protein TsgA (393 aa).

Helical transmembrane passes span 11–31, 51–71, 78–98, 101–121, 134–154, 162–182, 206–226, 245–265, 273–293, 297–317, 332–352, and 361–381; these read WISFLSYALTGALVIVTGMVM, FLNAGILISIFLNAWLMEIVP, FGFLLMVLAVAGLMFSHSLAL, TAMFILGVVSGITMSIGTFLI, LLFTDSFFSMAGMIFPMIAAF, WYWVYACIGLVYVAIFILTFG, IGVLFLSVAALCYILGQLGFI, TLVSNFWMSYMVGMWAFSFIL, ILTVLAGLAAILMYVFNTGTP, AWSILALGFFSSAIYTTIITL, FVLTCGTIGTMLTFVVTGPIV, and LLTANGLYAVVFVMCFLLGFV.

It belongs to the major facilitator superfamily. TsgA family.

Its subcellular location is the cell inner membrane. In Shigella boydii serotype 4 (strain Sb227), this protein is Protein TsgA.